We begin with the raw amino-acid sequence, 478 residues long: Serralysin C (478 aa).

The propeptide occupies 1-17; the sequence is MEKNLSSRDDDALHSLS. H187 is a Zn(2+) binding site. E188 is a catalytic residue. Residues H191 and Y227 each contribute to the Zn(2+) site. 30 residues coordinate Ca(2+): R264, G266, D296, G298, G299, D301, T338, E340, G345, G347, D349, N354, A356, N358, G362, G363, A364, G365, D367, G371, G372, G374, D376, G380, G381, G383, D385, D394, D401, and D411. 2 Hemolysin-type calcium-binding repeats span residues 343 to 360 and 361 to 378; these read IGGS…DNTL and RGGA…ADRL.

It belongs to the peptidase M10B family. The cofactor is Ca(2+). Requires Zn(2+) as cofactor.

The protein resides in the secreted. The catalysed reaction is Preferential cleavage of bonds with hydrophobic residues in P1'.. This is Serralysin C (prtC) from Dickeya chrysanthemi (Pectobacterium chrysanthemi).